We begin with the raw amino-acid sequence, 247 residues long: Ribosomal RNA large subunit methyltransferase E (247 aa).

Residues 1-21 (MKVNPKNSPKDNLKDSPKVSA) form a disordered region. The span at 8 to 17 (SPKDNLKDSP) shows a compositional bias: basic and acidic residues. Residues Gly-80, Trp-82, Asp-108, Asp-124, and Asp-153 each coordinate S-adenosyl-L-methionine. Lys-193 serves as the catalytic Proton acceptor.

It belongs to the class I-like SAM-binding methyltransferase superfamily. RNA methyltransferase RlmE family.

It is found in the cytoplasm. The enzyme catalyses uridine(2552) in 23S rRNA + S-adenosyl-L-methionine = 2'-O-methyluridine(2552) in 23S rRNA + S-adenosyl-L-homocysteine + H(+). Functionally, specifically methylates the uridine in position 2552 of 23S rRNA at the 2'-O position of the ribose in the fully assembled 50S ribosomal subunit. This Polaromonas sp. (strain JS666 / ATCC BAA-500) protein is Ribosomal RNA large subunit methyltransferase E.